Here is a 260-residue protein sequence, read N- to C-terminus: Indole-3-glycerol phosphate synthase (260 aa).

Belongs to the TrpC family.

The enzyme catalyses 1-(2-carboxyphenylamino)-1-deoxy-D-ribulose 5-phosphate + H(+) = (1S,2R)-1-C-(indol-3-yl)glycerol 3-phosphate + CO2 + H2O. The protein operates within amino-acid biosynthesis; L-tryptophan biosynthesis; L-tryptophan from chorismate: step 4/5. In Thermoanaerobacter sp. (strain X514), this protein is Indole-3-glycerol phosphate synthase.